Consider the following 713-residue polypeptide: Meiotic activator RIM4 (713 aa).

The interval 1–90 is disordered; the sequence is MKTEISTADS…TSTSTESRGR (90 aa). The span at 21–31 shows a compositional bias: basic and acidic residues; it reads ADSELVIREDI. Residues 50–71 are compositionally biased toward acidic residues; the sequence is GEDSDTDSDNFLQDPEDDVDEE. The span at 74 to 90 shows a compositional bias: low complexity; the sequence is GRGTVTTTSTSTESRGR. Positions 93 to 172 constitute an RRM 1 domain; that stretch reads SCIFVASLAA…RRLRCEPAKV (80 aa). The segment at 276-337 is disordered; that stretch reads HQNNGIINND…SDGIYDDEDK (62 aa). Over residues 278–298 the composition is skewed to low complexity; that stretch reads NNGIINNDGSNNNDNNNSNNN. The span at 299–327 shows a compositional bias: basic and acidic residues; sequence NREDSRRNGDVIEEECGHVHGSDSEEKLT. One can recognise an RRM 2 domain in the interval 346–420; that stretch reads RSIFVGQLDK…KTMHVQYKEV (75 aa). The disordered stretch occupies residues 524–609; sequence KSMPNSWSSP…KRYARRSSYG (86 aa). Phosphoserine is present on S525. Residues 526-546 show a composition bias toward low complexity; that stretch reads MPNSWSSPSSKSVNSENESVN. Over residues 563–574 the composition is skewed to polar residues; sequence GRYNAANSFTTY. The span at 575-594 shows a compositional bias: low complexity; it reads NNSSAGNSNNNNNNNNSNSN.

Polyubiquitinated by RSP5.

In terms of biological role, positive regulator of sporulation-specific genes and of sporulation. Required for premeiotic DNA synthesis and meiotic chromosomal segregation. May act in a nutritional signaling pathway. In Saccharomyces cerevisiae (strain ATCC 204508 / S288c) (Baker's yeast), this protein is Meiotic activator RIM4 (RIM4).